Reading from the N-terminus, the 326-residue chain is MHKKRVFSGIQPTGQIHLGNYLGAIKHWVEMQDEYENLFCVVNSHAITLPIDPAFLKSQSYELVKLLLACGIDPKQSGLFIQSEVDEHPALAWLLNCQVSMGEMQRMTQFKDKSLKNPKSVNVGLFNYPILMASDILLYQSDLVPVGEDQKQHLELTRNIAEKFNRDFGNCFKVPEPLIAKVGARVMGLDDPKVKMSKSHQGANHAIFLLDEPDIIVKKIKKAATDSMGVIAFDEKREGIFNLLNIYMLLSNESPENIEERFKNKGYGDFKKELAEVMIQALKPIQERYKEISDDEVKAILNGGAEKARPLARATYQKAKELMGLI.

ATP is bound by residues Q11–T13 and G19–N20. The short motif at P12–N20 is the 'HIGH' region element. Residue D135 coordinates L-tryptophan. Residues G147–D149, V186, and K195–S199 each bind ATP. The 'KMSKS' region signature appears at K195–S199.

The protein belongs to the class-I aminoacyl-tRNA synthetase family. As to quaternary structure, homodimer.

The protein resides in the cytoplasm. It catalyses the reaction tRNA(Trp) + L-tryptophan + ATP = L-tryptophyl-tRNA(Trp) + AMP + diphosphate + H(+). In terms of biological role, catalyzes the attachment of tryptophan to tRNA(Trp). The protein is Tryptophan--tRNA ligase of Helicobacter pylori (strain ATCC 700392 / 26695) (Campylobacter pylori).